Here is a 159-residue protein sequence, read N- to C-terminus: uncharacterized protein (159 aa).

A run of 3 helical transmembrane segments spans residues 16–36, 84–104, and 112–132; these read IVLP…AFIF, VYAG…LLII, and VFFY…LLPV.

The protein resides in the cell membrane. This is an uncharacterized protein from Bacillus subtilis (strain 168).